We begin with the raw amino-acid sequence, 68 residues long: Negative regulatory protein YxlD (68 aa).

The next 2 membrane-spanning stretches (helical) occupy residues glutamate 5–isoleucine 25 and tryptophan 37–isoleucine 57.

The protein resides in the cell membrane. In terms of biological role, together with YxlE, is important for negative regulation of sigma Y activity, being the major negative regulator. The polypeptide is Negative regulatory protein YxlD (yxlD) (Bacillus subtilis (strain 168)).